We begin with the raw amino-acid sequence, 291 residues long: Shikimate dehydrogenase (NADP(+)) (291 aa).

Shikimate is bound by residues 23-25 (SFS) and threonine 70. Lysine 74 serves as the catalytic Proton acceptor. Shikimate is bound by residues asparagine 95 and aspartate 110. Residues 135 to 139 (GAGGA) and leucine 232 each bind NADP(+). Residue tyrosine 234 coordinates shikimate. Residue glycine 255 participates in NADP(+) binding.

The protein belongs to the shikimate dehydrogenase family. In terms of assembly, homodimer.

It carries out the reaction shikimate + NADP(+) = 3-dehydroshikimate + NADPH + H(+). It participates in metabolic intermediate biosynthesis; chorismate biosynthesis; chorismate from D-erythrose 4-phosphate and phosphoenolpyruvate: step 4/7. In terms of biological role, involved in the biosynthesis of the chorismate, which leads to the biosynthesis of aromatic amino acids. Catalyzes the reversible NADPH linked reduction of 3-dehydroshikimate (DHSA) to yield shikimate (SA). The protein is Shikimate dehydrogenase (NADP(+)) of Desulforamulus reducens (strain ATCC BAA-1160 / DSM 100696 / MI-1) (Desulfotomaculum reducens).